Here is a 521-residue protein sequence, read N- to C-terminus: Biotinidase (521 aa).

Residues 1-25 (MSGARTAHALVFLLGCSALALGVCS) form the signal peptide. Residues 50-329 (NPLELSSRQQ…QGLVGTENTT (280 aa)) form the CN hydrolase domain. The Proton acceptor role is filled by E90. Residues N128 and N181 are each glycosylated (N-linked (GlcNAc...) asparagine). The Proton donor role is filled by K190. C223 serves as the catalytic Nucleophile. A glycan (N-linked (GlcNAc...) asparagine) is linked at N380.

It belongs to the carbon-nitrogen hydrolase superfamily. BTD/VNN family.

It is found in the secreted. The protein localises to the extracellular space. The enzyme catalyses biocytin + H2O = biotin + L-lysine. It carries out the reaction biotin amide + H2O = biotin + NH4(+). Catalytic release of biotin from biocytin, the product of biotin-dependent carboxylases degradation. The polypeptide is Biotinidase (Rattus norvegicus (Rat)).